The primary structure comprises 141 residues: MILMNLIEALTNPDTFFKKLSQKEISLKEPFLIVLIFSILIAISAYISTSIIYKIFPPQYQQVLAFTKIIALISTFIGGIVAWLIIAGFMHLISMIFKGEGSFKKTLSFTGYGFLPNIVGALITIPIAYYMREISQQEMRL.

3 helical membrane-spanning segments follow: residues 32–52, 69–89, and 109–129; these read LIVL…TSII, IIAL…IAGF, and FTGY…PIAY.

The protein resides in the cell membrane. This is an uncharacterized protein from Methanocaldococcus jannaschii (strain ATCC 43067 / DSM 2661 / JAL-1 / JCM 10045 / NBRC 100440) (Methanococcus jannaschii).